A 700-amino-acid polypeptide reads, in one-letter code: Interleukin-1 receptor accessory protein-like 1-B (700 aa).

Positions 1-18 (MRSRVPLQILLYAAVIRS) are cleaved as a signal peptide. Over 19 to 357 (LKVVSKRGSV…QLSRRELMYT (339 aa)) the chain is Extracellular. The region spanning 32-134 (TDWSVDYLRY…YCMKVSMALT (103 aa)) is the Ig-like C2-type 1 domain. A disulfide bridge connects residues C53 and C118. N-linked (GlcNAc...) asparagine glycans are attached at residues N63, N122, N138, N213, N264, and N331. 2 consecutive Ig-like C2-type domains span residues 143–232 (CYNS…TELT) and 242–350 (PKIL…IQLS). A disulfide bond links C164 and C216. C267 and C334 are disulfide-bonded. Residues 358–378 (VELAGGLGAILLMLIFLVSLY) form a helical membrane-spanning segment. Residues 379–700 (KCYRIELMLF…RETSISSVIW (322 aa)) are Cytoplasmic-facing. In terms of domain architecture, TIR spans 403-559 (KDYDAYVSYT…RFWKQLQYEM (157 aa)). The active site involves E491. The interval 564–700 (PEPKLSHEQV…RETSISSVIW (137 aa)) is required for synaptic vesicle accumulation during synaptogenesis.

Belongs to the interleukin-1 receptor family.

It is found in the cell membrane. The protein resides in the cytoplasm. It catalyses the reaction NAD(+) + H2O = ADP-D-ribose + nicotinamide + H(+). In terms of biological role, may regulate secretion and presynaptic differentiation through inhibition of the activity of N-type voltage-gated calcium channel. During presynaptic differentiation may regulate both synaptic vesicle accumulation in axon terminals and subsequent axon terminal remodeling. This chain is Interleukin-1 receptor accessory protein-like 1-B (il1rapl1b), found in Danio rerio (Zebrafish).